The primary structure comprises 235 residues: Aspartate/glutamate leucyltransferase (235 aa).

The protein belongs to the R-transferase family. Bpt subfamily.

The protein resides in the cytoplasm. The enzyme catalyses N-terminal L-glutamyl-[protein] + L-leucyl-tRNA(Leu) = N-terminal L-leucyl-L-glutamyl-[protein] + tRNA(Leu) + H(+). It carries out the reaction N-terminal L-aspartyl-[protein] + L-leucyl-tRNA(Leu) = N-terminal L-leucyl-L-aspartyl-[protein] + tRNA(Leu) + H(+). Functionally, functions in the N-end rule pathway of protein degradation where it conjugates Leu from its aminoacyl-tRNA to the N-termini of proteins containing an N-terminal aspartate or glutamate. This is Aspartate/glutamate leucyltransferase from Pseudomonas fluorescens (strain ATCC BAA-477 / NRRL B-23932 / Pf-5).